The chain runs to 449 residues: UDP-N-acetylmuramoylalanine--D-glutamate ligase (449 aa).

Residue 118-124 (GTNGKTT) coordinates ATP.

Belongs to the MurCDEF family.

The protein localises to the cytoplasm. It carries out the reaction UDP-N-acetyl-alpha-D-muramoyl-L-alanine + D-glutamate + ATP = UDP-N-acetyl-alpha-D-muramoyl-L-alanyl-D-glutamate + ADP + phosphate + H(+). It functions in the pathway cell wall biogenesis; peptidoglycan biosynthesis. Cell wall formation. Catalyzes the addition of glutamate to the nucleotide precursor UDP-N-acetylmuramoyl-L-alanine (UMA). The sequence is that of UDP-N-acetylmuramoylalanine--D-glutamate ligase from Staphylococcus haemolyticus (strain JCSC1435).